Consider the following 460-residue polypeptide: Cytochrome P450 CYP71D312 (460 aa).

Residue C398 participates in heme binding.

Belongs to the cytochrome P450 family. Heme serves as cofactor.

Functionally, probable heme-thiolate monooxygenase. The chain is Cytochrome P450 CYP71D312 from Panax ginseng (Korean ginseng).